The primary structure comprises 159 residues: MTTRAIYPGTFDPITNGHLDIITRAASMFDELILAVAASPHKKTMFSLDERVALAQQAAAHLQNVSVTGFSDLMANFAQAQQGNVLVRGLRTAGDFEYEMQLAHMNRHLMPTLESVFLMPSKEWSFISSSLVKEVARHQGDVSHFLPAHVHQALLEKLR.

Substrate is bound at residue Thr10. ATP-binding positions include 10-11 (TF) and His18. Substrate contacts are provided by Lys42, Met74, and Arg88. ATP is bound by residues 89–91 (GLR), Glu99, and 124–130 (WSFISSS).

This sequence belongs to the bacterial CoaD family. In terms of assembly, homohexamer. The cofactor is Mg(2+).

It localises to the cytoplasm. It catalyses the reaction (R)-4'-phosphopantetheine + ATP + H(+) = 3'-dephospho-CoA + diphosphate. The protein operates within cofactor biosynthesis; coenzyme A biosynthesis; CoA from (R)-pantothenate: step 4/5. Reversibly transfers an adenylyl group from ATP to 4'-phosphopantetheine, yielding dephospho-CoA (dPCoA) and pyrophosphate. The protein is Phosphopantetheine adenylyltransferase of Cronobacter sakazakii (strain ATCC BAA-894) (Enterobacter sakazakii).